We begin with the raw amino-acid sequence, 460 residues long: Glycine--tRNA ligase (460 aa).

Substrate contacts are provided by Arg99 and Glu162. Residues 194–196 (RNE), 204–209 (FRTREF), 281–282 (EL), and 325–328 (GVGR) contribute to the ATP site. 209–213 (FEQME) is a substrate binding site. 321-325 (EPAAG) lines the substrate pocket.

The protein belongs to the class-II aminoacyl-tRNA synthetase family. As to quaternary structure, homodimer.

The protein localises to the cytoplasm. It carries out the reaction tRNA(Gly) + glycine + ATP = glycyl-tRNA(Gly) + AMP + diphosphate. Its function is as follows. Catalyzes the attachment of glycine to tRNA(Gly). This chain is Glycine--tRNA ligase, found in Streptomyces coelicolor (strain ATCC BAA-471 / A3(2) / M145).